Reading from the N-terminus, the 67-residue chain is ATP synthase F(0) complex subunit 8 (67 aa).

A helical membrane pass occupies residues 8-24 (TWFINIVSMILTLFIVF). Lys-54 bears the N6-acetyllysine; alternate mark. Lys-54 bears the N6-succinyllysine; alternate mark. Lys-57 is subject to N6-acetyllysine.

Belongs to the ATPase protein 8 family. As to quaternary structure, component of the ATP synthase complex composed at least of ATP5F1A/subunit alpha, ATP5F1B/subunit beta, ATP5MC1/subunit c (homooctomer), MT-ATP6/subunit a, MT-ATP8/subunit 8, ATP5ME/subunit e, ATP5MF/subunit f, ATP5MG/subunit g, ATP5MK/subunit k, ATP5MJ/subunit j, ATP5F1C/subunit gamma, ATP5F1D/subunit delta, ATP5F1E/subunit epsilon, ATP5PF/subunit F6, ATP5PB/subunit b, ATP5PD/subunit d, ATP5PO/subunit OSCP. ATP synthase complex consists of a soluble F(1) head domain (subunits alpha(3) and beta(3)) - the catalytic core - and a membrane F(0) domain - the membrane proton channel (subunits c, a, 8, e, f, g, k and j). These two domains are linked by a central stalk (subunits gamma, delta, and epsilon) rotating inside the F1 region and a stationary peripheral stalk (subunits F6, b, d, and OSCP). Interacts with PRICKLE3.

It localises to the mitochondrion membrane. In terms of biological role, subunit 8, of the mitochondrial membrane ATP synthase complex (F(1)F(0) ATP synthase or Complex V) that produces ATP from ADP in the presence of a proton gradient across the membrane which is generated by electron transport complexes of the respiratory chain. ATP synthase complex consist of a soluble F(1) head domain - the catalytic core - and a membrane F(1) domain - the membrane proton channel. These two domains are linked by a central stalk rotating inside the F(1) region and a stationary peripheral stalk. During catalysis, ATP synthesis in the catalytic domain of F(1) is coupled via a rotary mechanism of the central stalk subunits to proton translocation. In vivo, can only synthesize ATP although its ATP hydrolase activity can be activated artificially in vitro. Part of the complex F(0) domain. The sequence is that of ATP synthase F(0) complex subunit 8 from Equus asinus (Donkey).